The primary structure comprises 536 residues: Glutamyl-tRNA(Gln) amidotransferase subunit B, mitochondrial (536 aa).

Residues 1–8 (MLRVHRLY) constitute a mitochondrion transit peptide.

It belongs to the GatB/GatE family. GatB subfamily. Subunit of the heterotrimeric GatFAB amidotransferase (AdT) complex, composed of A, B and F subunits.

It is found in the mitochondrion. The enzyme catalyses L-glutamyl-tRNA(Gln) + L-glutamine + ATP + H2O = L-glutaminyl-tRNA(Gln) + L-glutamate + ADP + phosphate + H(+). Allows the formation of correctly charged Gln-tRNA(Gln) through the transamidation of misacylated Glu-tRNA(Gln) in the mitochondria. The reaction takes place in the presence of glutamine and ATP through an activated gamma-phospho-Glu-tRNA(Gln). This chain is Glutamyl-tRNA(Gln) amidotransferase subunit B, mitochondrial, found in Eremothecium gossypii (strain ATCC 10895 / CBS 109.51 / FGSC 9923 / NRRL Y-1056) (Yeast).